A 279-amino-acid polypeptide reads, in one-letter code: Acetylglutamate kinase (279 aa).

Substrate is bound by residues 64 to 65 (GG), Arg86, and Asn177.

Belongs to the acetylglutamate kinase family. ArgB subfamily.

It localises to the cytoplasm. It carries out the reaction N-acetyl-L-glutamate + ATP = N-acetyl-L-glutamyl 5-phosphate + ADP. Its pathway is amino-acid biosynthesis; L-arginine biosynthesis; N(2)-acetyl-L-ornithine from L-glutamate: step 2/4. Functionally, catalyzes the ATP-dependent phosphorylation of N-acetyl-L-glutamate. The chain is Acetylglutamate kinase from Campylobacter jejuni subsp. doylei (strain ATCC BAA-1458 / RM4099 / 269.97).